The primary structure comprises 79 residues: UPF0154 protein lwe1321 (79 aa).

Residues 2 to 22 (WIYILVGIICLLAGLAGGFFI) traverse the membrane as a helical segment. A compositionally biased stretch (polar residues) spans 57–66 (KINQMMSAMN). A disordered region spans residues 57-79 (KINQMMSAMNKQQEKEKPKKAKK).

This sequence belongs to the UPF0154 family.

Its subcellular location is the cell membrane. This Listeria welshimeri serovar 6b (strain ATCC 35897 / DSM 20650 / CCUG 15529 / CIP 8149 / NCTC 11857 / SLCC 5334 / V8) protein is UPF0154 protein lwe1321.